Consider the following 958-residue polypeptide: Isoleucine--tRNA ligase (958 aa).

The interval 1–32 (MSDNQNKPGKPAAKPQSKYPVNMTDTPFPMRG) is disordered. Residues 71–81 (PYANGDIHLGH) carry the 'HIGH' region motif. Glutamate 590 is an L-isoleucyl-5'-AMP binding site. Residues 631–635 (KMSKS) carry the 'KMSKS' region motif. Lysine 634 lines the ATP pocket. Residues cysteine 921, cysteine 924, cysteine 941, and cysteine 944 each contribute to the Zn(2+) site.

Belongs to the class-I aminoacyl-tRNA synthetase family. IleS type 1 subfamily. As to quaternary structure, monomer. Zn(2+) is required as a cofactor.

The protein localises to the cytoplasm. It carries out the reaction tRNA(Ile) + L-isoleucine + ATP = L-isoleucyl-tRNA(Ile) + AMP + diphosphate. Its function is as follows. Catalyzes the attachment of isoleucine to tRNA(Ile). As IleRS can inadvertently accommodate and process structurally similar amino acids such as valine, to avoid such errors it has two additional distinct tRNA(Ile)-dependent editing activities. One activity is designated as 'pretransfer' editing and involves the hydrolysis of activated Val-AMP. The other activity is designated 'posttransfer' editing and involves deacylation of mischarged Val-tRNA(Ile). This chain is Isoleucine--tRNA ligase, found in Janthinobacterium sp. (strain Marseille) (Minibacterium massiliensis).